The primary structure comprises 282 residues: Bifunctional protein FolD (282 aa).

Residues 164–166 (GRS) and Ser189 contribute to the NADP(+) site.

It belongs to the tetrahydrofolate dehydrogenase/cyclohydrolase family. In terms of assembly, homodimer.

It catalyses the reaction (6R)-5,10-methylene-5,6,7,8-tetrahydrofolate + NADP(+) = (6R)-5,10-methenyltetrahydrofolate + NADPH. It carries out the reaction (6R)-5,10-methenyltetrahydrofolate + H2O = (6R)-10-formyltetrahydrofolate + H(+). Its pathway is one-carbon metabolism; tetrahydrofolate interconversion. Functionally, catalyzes the oxidation of 5,10-methylenetetrahydrofolate to 5,10-methenyltetrahydrofolate and then the hydrolysis of 5,10-methenyltetrahydrofolate to 10-formyltetrahydrofolate. The sequence is that of Bifunctional protein FolD from Streptococcus suis (strain 98HAH33).